A 288-amino-acid polypeptide reads, in one-letter code: Mycothiol S-conjugate amidase (288 aa).

Residues His12, Asp15, and His142 each contribute to the Zn(2+) site.

Belongs to the MshB deacetylase family. Mca subfamily. As to quaternary structure, monomer. Requires Zn(2+) as cofactor.

It carries out the reaction mycothiol S-conjugate + H2O = an N-acetyl-L-cysteine-S-conjugate + 1D-myo-inositol 2-amino-2-deoxy-alpha-D-glucopyranoside. Its activity is regulated as follows. Partially inhibited by MSH when MSmB is used as substrate. Competitively inhibited by the GlcNAc-cyclohexyl derivative 5-(4-chlorophenyl)-N-((2R,3R,4R,5S,6R)-2-(cyclohexylthio)-tetrahydro-4,5-dihydroxy-6-(hydroxymethyl)-2H-pyran-3-yl)furan-2-carboxamide, which also inhibits MshB. Its function is as follows. A mycothiol (MSH, N-acetyl-cysteinyl-glucosaminyl-inositol) S-conjugate amidase, it recycles conjugated MSH to the N-acetyl cysteine conjugate and the MSH precursor. Involved in MSH-dependent detoxification of a number of alkylating agents and antibiotics. Activity is specific for the mycothiol moiety. Has a low but measurable deacetylation activity on GlcNAc-Ins (N-acetyl-glucosaminyl-inositol), and thus can also directly contribute to the production of MSH. The sequence is that of Mycothiol S-conjugate amidase from Mycobacterium tuberculosis (strain ATCC 25618 / H37Rv).